The primary structure comprises 246 residues: Orotidine 5'-phosphate decarboxylase (246 aa).

Residues aspartate 22, lysine 44, 71–80, threonine 131, arginine 192, glutamine 201, glycine 221, and arginine 222 each bind substrate; that span reads DLKFHDIPNT. Lysine 73 (proton donor) is an active-site residue.

The protein belongs to the OMP decarboxylase family. Type 1 subfamily. Homodimer.

The catalysed reaction is orotidine 5'-phosphate + H(+) = UMP + CO2. The protein operates within pyrimidine metabolism; UMP biosynthesis via de novo pathway; UMP from orotate: step 2/2. Catalyzes the decarboxylation of orotidine 5'-monophosphate (OMP) to uridine 5'-monophosphate (UMP). The polypeptide is Orotidine 5'-phosphate decarboxylase (Yersinia enterocolitica serotype O:8 / biotype 1B (strain NCTC 13174 / 8081)).